Here is a 315-residue protein sequence, read N- to C-terminus: tRNA uridine(34) hydroxylase (315 aa).

The Rhodanese domain maps to 136-230; that stretch reads SDPETLVIDT…YLEEIPPEES (95 aa). C190 acts as the Cysteine persulfide intermediate in catalysis.

Belongs to the TrhO family.

It catalyses the reaction uridine(34) in tRNA + AH2 + O2 = 5-hydroxyuridine(34) in tRNA + A + H2O. In terms of biological role, catalyzes oxygen-dependent 5-hydroxyuridine (ho5U) modification at position 34 in tRNAs. This Sinorhizobium medicae (strain WSM419) (Ensifer medicae) protein is tRNA uridine(34) hydroxylase.